Reading from the N-terminus, the 595-residue chain is 3-hydroxy-3-methylglutaryl-coenzyme A reductase 2 (595 aa).

A glycan (N-linked (GlcNAc...) asparagine) is linked at Asn35. 2 consecutive transmembrane segments (helical) span residues 48-68 (LPLY…MYFL) and 92-112 (AIVS…IGFV). Residues 113-183 (QTFVSRGNND…SPLITPASSE (71 aa)) are linker. Asn121 carries N-linked (GlcNAc...) asparagine glycosylation. Residues 184 to 595 (EDEEIINSVV…KYNRSTKASS (412 aa)) are catalytic. Glu278 functions as the Charge relay system in the catalytic mechanism. N-linked (GlcNAc...) asparagine glycosylation occurs at Asn342. Lys410 (charge relay system) is an active-site residue. Asn455 is a glycosylation site (N-linked (GlcNAc...) asparagine). Asp486 acts as the Charge relay system in catalysis. The active-site Proton donor is the His584. A glycan (N-linked (GlcNAc...) asparagine) is linked at Asn588.

It belongs to the HMG-CoA reductase family. Expressed in young flowers and in mature sepals and ovaries.

It localises to the endoplasmic reticulum membrane. It carries out the reaction (R)-mevalonate + 2 NADP(+) + CoA = (3S)-3-hydroxy-3-methylglutaryl-CoA + 2 NADPH + 2 H(+). Its pathway is metabolic intermediate biosynthesis; (R)-mevalonate biosynthesis; (R)-mevalonate from acetyl-CoA: step 3/3. Catalyzes the synthesis of mevalonate. The specific precursor of all isoprenoid compounds present in plants. In Solanum tuberosum (Potato), this protein is 3-hydroxy-3-methylglutaryl-coenzyme A reductase 2 (HMG2).